Consider the following 181-residue polypeptide: Alkyl hydroperoxide reductase AhpD (181 aa).

Cys131 (proton donor) is an active-site residue. Cys131 and Cys134 are oxidised to a cystine. Cys134 serves as the catalytic Cysteine sulfenic acid (-SOH) intermediate.

It belongs to the AhpD family.

The enzyme catalyses N(6)-[(R)-dihydrolipoyl]-L-lysyl-[lipoyl-carrier protein] + a hydroperoxide = N(6)-[(R)-lipoyl]-L-lysyl-[lipoyl-carrier protein] + an alcohol + H2O. Functionally, antioxidant protein with alkyl hydroperoxidase activity. Required for the reduction of the AhpC active site cysteine residues and for the regeneration of the AhpC enzyme activity. This is Alkyl hydroperoxide reductase AhpD from Rhodopseudomonas palustris (strain BisA53).